The sequence spans 372 residues: Queuine tRNA-ribosyltransferase (372 aa).

The active-site Proton acceptor is the Asp-89. Residues 89–93 (DSGGF), Asp-161, and Gly-232 contribute to the substrate site. Residues 262–268 (GIGDLPS) are RNA binding. The active-site Nucleophile is the Asp-281. Residues 286 to 290 (TKAAR) are RNA binding; important for wobble base 34 recognition. 4 residues coordinate Zn(2+): Cys-319, Cys-321, Cys-324, and His-351.

This sequence belongs to the queuine tRNA-ribosyltransferase family. As to quaternary structure, homodimer. Within each dimer, one monomer is responsible for RNA recognition and catalysis, while the other monomer binds to the replacement base PreQ1. It depends on Zn(2+) as a cofactor.

It catalyses the reaction 7-aminomethyl-7-carbaguanine + guanosine(34) in tRNA = 7-aminomethyl-7-carbaguanosine(34) in tRNA + guanine. It functions in the pathway tRNA modification; tRNA-queuosine biosynthesis. Its function is as follows. Catalyzes the base-exchange of a guanine (G) residue with the queuine precursor 7-aminomethyl-7-deazaguanine (PreQ1) at position 34 (anticodon wobble position) in tRNAs with GU(N) anticodons (tRNA-Asp, -Asn, -His and -Tyr). Catalysis occurs through a double-displacement mechanism. The nucleophile active site attacks the C1' of nucleotide 34 to detach the guanine base from the RNA, forming a covalent enzyme-RNA intermediate. The proton acceptor active site deprotonates the incoming PreQ1, allowing a nucleophilic attack on the C1' of the ribose to form the product. After dissociation, two additional enzymatic reactions on the tRNA convert PreQ1 to queuine (Q), resulting in the hypermodified nucleoside queuosine (7-(((4,5-cis-dihydroxy-2-cyclopenten-1-yl)amino)methyl)-7-deazaguanosine). The chain is Queuine tRNA-ribosyltransferase from Chlamydia trachomatis serovar L2 (strain ATCC VR-902B / DSM 19102 / 434/Bu).